The chain runs to 312 residues: Pantothenate kinase (312 aa).

Residue 97–104 (GSVAVGKS) participates in ATP binding.

This sequence belongs to the prokaryotic pantothenate kinase family.

The protein localises to the cytoplasm. The enzyme catalyses (R)-pantothenate + ATP = (R)-4'-phosphopantothenate + ADP + H(+). It functions in the pathway cofactor biosynthesis; coenzyme A biosynthesis; CoA from (R)-pantothenate: step 1/5. The chain is Pantothenate kinase from Mycobacterium marinum (strain ATCC BAA-535 / M).